The following is a 733-amino-acid chain: Hypermethylated in cancer 1 protein (733 aa).

Residues 47 to 110 (CDVIIVVQNA…IYTGRLTDSV (64 aa)) form the BTB domain. Positions 154 to 315 (KYCHLRGGGS…PFRGSGGSPG (162 aa)) are mediates HDAC-dependent transcriptional repression. At Arg-159 the chain carries Omega-N-methylarginine. Residues 189 to 209 (YSSPAGPPPPPAAEPPSGPDA) form a disordered region. A compositionally biased stretch (pro residues) spans 193-206 (AGPPPPPAAEPPSG). A Phosphoserine modification is found at Ser-237. The segment at 241–247 (GLDLSKK) is interaction with CTBP1. The tract at residues 241 to 421 (GLDLSKKSPP…PGGHLEGYPC (181 aa)) is disordered. Ser-248 bears the Phosphoserine mark. Lys-333 carries the N6-acetyllysine; alternate modification. Residue Lys-333 forms a Glycyl lysine isopeptide (Lys-Gly) (interchain with G-Cter in SUMO); alternate linkage. Residues 344-361 (ELVRDRGSPGERLEERGG) are compositionally biased toward basic and acidic residues. The residue at position 366 (Ser-366) is a Phosphoserine. Positions 368–380 (GGPPLGLVPPPRY) are enriched in pro residues. 5 C2H2-type zinc fingers span residues 437 to 464 (YVCI…EEEE), 507 to 534 (YRCA…LTRP), 535 to 562 (YPCT…GLKP), 563 to 590 (FACD…GEKP), and 591 to 618 (YECQ…VGGA). Residue Ser-704 is modified to Phosphoserine.

Belongs to the krueppel C2H2-type zinc-finger protein family. Hic subfamily. Self-associates. Interacts with HIC2. Interacts with CTBP1 and CTBP2. Interacts with TCF7L2 and ARID1A. Interacts with MTA1 and MBD3; indicative for an association with the NuRD complex. Interacts with SIRT1. Post-translationally, acetylated on several residues, including Lys-333. Lys-333 is deacetylated by SIRT1. In terms of processing, sumoylated on Lys-333 by a PIAS family member, which enhances interaction with MTA1, positively regulates transcriptional repression activity and is enhanced by HDAC4. Ubiquitously expressed with highest levels in heart and lung.

The protein resides in the nucleus. In terms of biological role, transcriptional repressor. Recognizes and binds to the consensus sequence '5-[CG]NG[CG]GGGCA[CA]CC-3'. May act as a tumor suppressor. Involved in development of head, face, limbs and ventral body wall. Involved in down-regulation of SIRT1 and thereby is involved in regulation of p53/TP53-dependent apoptotic DNA-damage responses. The specific target gene promoter association seems to be depend on corepressors, such as CTBP1 or CTBP2 and MTA1. In cooperation with MTA1 (indicative for an association with the NuRD complex) represses transcription from CCND1/cyclin-D1 and CDKN1C/p57Kip2 specifically in quiescent cells. Involved in regulation of the Wnt signaling pathway probably by association with TCF7L2 and preventing TCF7L2 and CTNNB1 association with promoters of TCF-responsive genes. Seems to repress transcription from E2F1 and ATOH1 which involves ARID1A, indicative for the participation of a distinct SWI/SNF-type chromatin-remodeling complex. Probably represses transcription from ACKR3, FGFBP1 and EFNA1. This is Hypermethylated in cancer 1 protein (Hic1) from Mus musculus (Mouse).